We begin with the raw amino-acid sequence, 290 residues long: MAALRALLPRACSSLLSSVRCPELRRFASGANFQYIITEKKGKNSSVGLIQLNRPKALNALCNGLIEELNQALETFEQDPAVGAIVLTGGDKAFAAGADIKEMQNRTFQDCYSSKFLSHWDHITRVKKPVIAAVNGYALGGGCELAMMCDIIYAGEKAQFGQPEILLGTIPGAGGTQRLTRAVGKSLAMEMVLTGDRISAQDAKQAGLVSKIFPVEKLVEEAIQCAEKIASNSKIVVAMAKESVNAAFEMTLTEGNKLEKRLFYSTFATDDRREGMTAFVEKRKANFKDH.

Residues 1 to 27 (MAALRALLPRACSSLLSSVRCPELRRF) constitute a mitochondrion transit peptide. 98–101 (ADIK) provides a ligand contact to substrate. Lys-101 carries the post-translational modification N6-acetyllysine; alternate. At Lys-101 the chain carries N6-succinyllysine; alternate. Ser-114 is modified (phosphoserine). Lys-115 carries the post-translational modification N6-acetyllysine; alternate. Residue Lys-115 is modified to N6-succinyllysine; alternate. Gly-141 is a binding site for substrate. Position 204 is an N6-succinyllysine (Lys-204). An N6-acetyllysine modification is found at Lys-211. Lys-217 is subject to N6-acetyllysine; alternate. Lys-217 carries the post-translational modification N6-succinyllysine; alternate.

This sequence belongs to the enoyl-CoA hydratase/isomerase family. Homohexamer; dimer of trimers. Post-translationally, acetylation of Lys-101 is observed in liver mitochondria from fasted mice but not from fed mice.

It localises to the mitochondrion matrix. It catalyses the reaction a (3S)-3-hydroxyacyl-CoA = a (2E)-enoyl-CoA + H2O. The catalysed reaction is a (3E)-enoyl-CoA = a 4-saturated (2E)-enoyl-CoA. It carries out the reaction (3E)-hexenoyl-CoA = (2E)-hexenoyl-CoA. The enzyme catalyses (3S)-3-hydroxybutanoyl-CoA = (2E)-butenoyl-CoA + H2O. It catalyses the reaction 3-hydroxyisovaleryl-CoA = 3-methylbut-2-enoyl-CoA + H2O. The catalysed reaction is 3-hydroxypropanoyl-CoA = acryloyl-CoA + H2O. It carries out the reaction 3-hydroxybutanoyl-CoA = (2E)-butenoyl-CoA + H2O. The enzyme catalyses 2-methylpropenoyl-CoA + H2O = (S)-3-hydroxyisobutanoyl-CoA. It catalyses the reaction (3S)-hydroxyhexanoyl-CoA = (2E)-hexenoyl-CoA + H2O. The catalysed reaction is (3S)-hydroxydecanoyl-CoA = (2E)-decenoyl-CoA + H2O. It functions in the pathway lipid metabolism; fatty acid beta-oxidation. In terms of biological role, converts unsaturated trans-2-enoyl-CoA species ((2E)-enoyl-CoA) to the corresponding (3S)-3-hydroxyacyl-CoA species through addition of a water molecule to the double bond. Catalyzes the hydration of medium- and short-chained fatty enoyl-CoA thioesters from 4 carbons long (C4) up to C16. Has high substrate specificity for crotonyl-CoA ((2E)-butenoyl-CoA) and moderate specificity for acryloyl-CoA, 3-methylcrotonyl-CoA (3-methyl-(2E)-butenoyl-CoA) and methacrylyl-CoA ((2E)-2-methylpropenoyl-CoA). Can bind tiglyl-CoA (2-methylcrotonoyl-CoA), but hydrates only a small amount of this substrate. Plays a key role in the beta-oxidation spiral of short- and medium-chain fatty acid oxidation. At a lower rate than the hydratase reaction, catalyzes the isomerase reaction of trans-3-enoyl-CoA species (such as (3E)-hexenoyl-CoA) to trans-2-enoyl-CoA species (such as (2E)-hexenoyl-CoA), which are subsequently hydrated to 3(S)-3-hydroxyacyl-CoA species (such as (3S)-hydroxyhexanoyl-CoA). This Mus musculus (Mouse) protein is Enoyl-CoA hydratase, mitochondrial.